Reading from the N-terminus, the 320-residue chain is Malate dehydrogenase (320 aa).

Residues 10 to 15 (GAGMIG) and D34 each bind NAD(+). R83 and R89 together coordinate substrate. Residues N96 and 119–121 (ITN) contribute to the NAD(+) site. 2 residues coordinate substrate: N121 and R152. H176 (proton acceptor) is an active-site residue.

It belongs to the LDH/MDH superfamily. MDH type 3 family.

It catalyses the reaction (S)-malate + NAD(+) = oxaloacetate + NADH + H(+). Its function is as follows. Catalyzes the reversible oxidation of malate to oxaloacetate. The protein is Malate dehydrogenase of Caulobacter vibrioides (strain NA1000 / CB15N) (Caulobacter crescentus).